Consider the following 1043-residue polypeptide: Protein translocase subunit SecA (1043 aa).

Residues Q143, 161–165 (GEGKT), and D665 each bind ATP. Over residues 980–1005 (ATAAPAAETTTTAKAADAARQQPPAA) the composition is skewed to low complexity. The tract at residues 980–1043 (ATAAPAAETT…KYKHCHGRNA (64 aa)) is disordered. Residues 1008–1022 (EEQKRQPVHVEKTPG) show a composition bias toward basic and acidic residues. Zn(2+) is bound by residues C1027, C1029, C1038, and H1039. The segment covering 1033–1043 (KKYKHCHGRNA) has biased composition (basic residues).

It belongs to the SecA family. As to quaternary structure, monomer and homodimer. Part of the essential Sec protein translocation apparatus which comprises SecA, SecYEG and auxiliary proteins SecDF. Other proteins may also be involved. It depends on Zn(2+) as a cofactor.

Its subcellular location is the cell inner membrane. It is found in the cytoplasm. It carries out the reaction ATP + H2O + cellular proteinSide 1 = ADP + phosphate + cellular proteinSide 2.. Part of the Sec protein translocase complex. Interacts with the SecYEG preprotein conducting channel. Has a central role in coupling the hydrolysis of ATP to the transfer of proteins into and across the cell membrane, serving as an ATP-driven molecular motor driving the stepwise translocation of polypeptide chains across the membrane. The sequence is that of Protein translocase subunit SecA from Chloroherpeton thalassium (strain ATCC 35110 / GB-78).